We begin with the raw amino-acid sequence, 463 residues long: ATP synthase subunit beta (463 aa).

Glycine 152–threonine 159 is a binding site for ATP.

It belongs to the ATPase alpha/beta chains family. As to quaternary structure, F-type ATPases have 2 components, CF(1) - the catalytic core - and CF(0) - the membrane proton channel. CF(1) has five subunits: alpha(3), beta(3), gamma(1), delta(1), epsilon(1). CF(0) has three main subunits: a(1), b(2) and c(9-12). The alpha and beta chains form an alternating ring which encloses part of the gamma chain. CF(1) is attached to CF(0) by a central stalk formed by the gamma and epsilon chains, while a peripheral stalk is formed by the delta and b chains.

The protein resides in the cell inner membrane. The enzyme catalyses ATP + H2O + 4 H(+)(in) = ADP + phosphate + 5 H(+)(out). In terms of biological role, produces ATP from ADP in the presence of a proton gradient across the membrane. The catalytic sites are hosted primarily by the beta subunits. This chain is ATP synthase subunit beta, found in Shewanella putrefaciens (strain CN-32 / ATCC BAA-453).